Reading from the N-terminus, the 393-residue chain is Formate-dependent phosphoribosylglycinamide formyltransferase (393 aa).

Residues 22-23 and Glu-82 each bind N(1)-(5-phospho-beta-D-ribosyl)glycinamide; that span reads EL. Residues Arg-114, Lys-155, 160 to 165, 195 to 198, and Glu-203 contribute to the ATP site; these read SSGHGQ and EGFI. Residues 119-308 form the ATP-grasp domain; it reads RLAAEELGLP…QFALHARAIL (190 aa). Mg(2+) is bound by residues Glu-267 and Glu-279. N(1)-(5-phospho-beta-D-ribosyl)glycinamide is bound by residues Asp-286, Lys-356, and 363-364; that span reads RR.

The protein belongs to the PurK/PurT family. Homodimer.

The enzyme catalyses N(1)-(5-phospho-beta-D-ribosyl)glycinamide + formate + ATP = N(2)-formyl-N(1)-(5-phospho-beta-D-ribosyl)glycinamide + ADP + phosphate + H(+). Its pathway is purine metabolism; IMP biosynthesis via de novo pathway; N(2)-formyl-N(1)-(5-phospho-D-ribosyl)glycinamide from N(1)-(5-phospho-D-ribosyl)glycinamide (formate route): step 1/1. Its function is as follows. Involved in the de novo purine biosynthesis. Catalyzes the transfer of formate to 5-phospho-ribosyl-glycinamide (GAR), producing 5-phospho-ribosyl-N-formylglycinamide (FGAR). Formate is provided by PurU via hydrolysis of 10-formyl-tetrahydrofolate. In Haemophilus ducreyi (strain 35000HP / ATCC 700724), this protein is Formate-dependent phosphoribosylglycinamide formyltransferase.